The primary structure comprises 382 residues: Pyrimidine monooxygenase RutA (382 aa).

FMN-binding positions include I68–K69, N134, E143, R159–Y160, and S209.

Belongs to the NtaA/SnaA/DszA monooxygenase family. RutA subfamily.

The catalysed reaction is uracil + FMNH2 + NADH + O2 = (Z)-3-ureidoacrylate + FMN + NAD(+) + H2O + H(+). It catalyses the reaction thymine + FMNH2 + NADH + O2 = (Z)-2-methylureidoacrylate + FMN + NAD(+) + H2O + H(+). Its function is as follows. Catalyzes the pyrimidine ring opening between N-3 and C-4 by an unusual flavin hydroperoxide-catalyzed mechanism, adding oxygen atoms in the process to yield ureidoacrylate peracid, that immediately reacts with FMN forming ureidoacrylate and FMN-N(5)-oxide. The FMN-N(5)-oxide reacts spontaneously with NADH to produce FMN. Requires the flavin reductase RutF to regenerate FMN in vivo. This Escherichia coli O81 (strain ED1a) protein is Pyrimidine monooxygenase RutA.